Here is a 235-residue protein sequence, read N- to C-terminus: High affinity immunoglobulin epsilon receptor subunit beta (235 aa).

Residues Met1–Pro23 are disordered. The Cytoplasmic segment spans residues Met1–Glu51. Residues Phe52–Val71 form a helical membrane-spanning segment. At Cys72–Lys89 the chain is on the extracellular side. The helical transmembrane segment at Leu90–Ile109 threads the bilayer. The Cytoplasmic portion of the chain corresponds to Ser110–Ser122. A helical transmembrane segment spans residues Leu123–Leu142. Topologically, residues Asn143 to Glu171 are extracellular. Residues Leu172–Thr191 form a helical membrane-spanning segment. At Ile192–Ser235 the chain is on the cytoplasmic side. Phosphotyrosine occurs at positions 210 and 216. Position 217 is a phosphoserine (Ser217). Tyr220 is modified (phosphotyrosine).

The protein belongs to the MS4A family. In terms of assembly, tetramer of an alpha chain, a beta chain, and two disulfide linked gamma chains. Binds LILRB1. Interacts with FGR. Interacts with FGR and FES/FPS. Interacts with LYN. Phosphorylated on tyrosine residues by LYN.

It is found in the membrane. Functionally, high affinity receptor that binds to the Fc region of immunoglobulins epsilon. Aggregation of FCER1 by multivalent antigens is required for the full mast cell response, including the release of preformed mediators (such as histamine) by degranulation and de novo production of lipid mediators and cytokines. Also mediates the secretion of important lymphokines. Binding of allergen to receptor-bound IgE leads to cell activation and the release of mediators responsible for the manifestations of allergy. In Mus musculus (Mouse), this protein is High affinity immunoglobulin epsilon receptor subunit beta (Ms4a2).